Reading from the N-terminus, the 407-residue chain is Melanoma-associated antigen B6 (407 aa).

The tract at residues 1–175 is disordered; that stretch reads MPRGHKSKLR…YDVAAEGEDE (175 aa). Polar residues-rich tracts occupy residues 18-29, 57-71, 94-113, and 136-155; these read TNGQPQGLTGPQ, DASI…SPTG, and PSTS…SPTG. The region spanning 195–394 is the MAGE domain; sequence VKKKACTLAQ…GLYPHLYEDA (200 aa).

In terms of tissue distribution, expressed in testis. Not expressed in other normal tissues, but is expressed in tumors of different histological origins.

The polypeptide is Melanoma-associated antigen B6 (MAGEB6) (Homo sapiens (Human)).